Reading from the N-terminus, the 106-residue chain is MLLWVFFLVTLTLSSGSHGSLPSQPLRIPRYADAIFTNSYRKVLGQLSARKLLQDIMNRQQGERNQEQGAKVRLGRQVDGVWTDQQQMALESTLVSLLQERRNSQG.

An N-terminal signal peptide occupies residues 1-19 (MLLWVFFLVTLTLSSGSHG). Positions 20 to 30 (SLPSQPLRIPR) are excised as a propeptide. A Leucine amide modification is found at Leu-74. Residues 77-106 (QVDGVWTDQQQMALESTLVSLLQERRNSQG) constitute a propeptide that is removed on maturation.

It belongs to the glucagon family.

The protein resides in the secreted. In terms of biological role, GRF is released by the hypothalamus and acts on the adenohypophyse to stimulate the secretion of growth hormone. The protein is Somatoliberin (GHRH) of Bos taurus (Bovine).